We begin with the raw amino-acid sequence, 466 residues long: Anthocyanidin 3-O-glucosyltransferase 1 (466 aa).

The active-site Proton acceptor is the His-22. His-22 and Gln-87 together coordinate an anthocyanidin. The Charge relay role is filled by Asp-122. Residue Thr-145 coordinates UDP-alpha-D-glucose. His-154 lines the an anthocyanidin pocket. Ala-346, Gln-348, His-363, Trp-366, Asn-367, Ser-368, and Glu-371 together coordinate UDP-alpha-D-glucose. Gly-386 contacts an anthocyanidin. UDP-alpha-D-glucose contacts are provided by Asp-387 and Gln-388.

Belongs to the UDP-glycosyltransferase family. In terms of tissue distribution, highest expression detected in receptacles and achenes, with very low levels detected in runners, leaves, flowers, crowns and green receptacles.

It catalyses the reaction an anthocyanidin + UDP-alpha-D-glucose + H(+) = an anthocyanidin 3-O-beta-D-glucoside + UDP. It carries out the reaction cyanidin + UDP-alpha-D-glucose = cyanidin 3-O-beta-D-glucoside + UDP + H(+). The enzyme catalyses pelargonidin + UDP-alpha-D-glucose = pelargonidin 3-O-beta-D-glucoside + UDP. The catalysed reaction is peonidin + UDP-alpha-D-glucose = peonidin 3-O-beta-D-glucoside + UDP. It catalyses the reaction delphinidin + UDP-alpha-D-glucose = delphinidin 3-O-beta-D-glucoside + UDP. It carries out the reaction a flavonol + UDP-alpha-D-glucose = a flavonol 3-O-beta-D-glucoside + UDP + H(+). It participates in pigment biosynthesis; anthocyanin biosynthesis. Functionally, in the presence of other necessary color factors, this glycosylation reaction allows the accumulation of anthocyanin pigments. Uses UDP-Glc as a sugar donor, but not UDP-Gal or UDP-GlcUA. Anthocyanidins are the preferred substrates in vivo, but flavonols can also be glucosylated in vitro. This is Anthocyanidin 3-O-glucosyltransferase 1 from Fragaria ananassa (Strawberry).